A 130-amino-acid polypeptide reads, in one-letter code: Trypsin inhibitor (130 aa).

The tract at residues 27–49 is disordered; it reads LHKQARQSGSGPSPQGPQQRPPL. Positions 32 to 49 are enriched in low complexity; it reads RQSGSGPSPQGPQQRPPL.

This sequence belongs to the 2S seed storage albumins family. The protein consists of two chains linked by disulfide bonds.

Functionally, inhibits trypsin with a Ki of 7 x 10(-6) M. The chain is Trypsin inhibitor from Mutarda arvensis (Charlock mustard).